Here is a 387-residue protein sequence, read N- to C-terminus: Protein spaetzle 5 (387 aa).

Positions 1–29 are cleaved as a signal peptide; sequence MTKSIKRPPPFSCKQVLLTYVILAYTVAA. Positions 30 to 284 are excised as a propeptide; that stretch reads HSSPPPCGLY…PLKKRSRTKR (255 aa). The disordered stretch occupies residues 133–197; the sequence is QTPFGGNPQR…SGGHLYINQS (65 aa). N-linked (GlcNAc...) asparagine glycans are attached at residues Asn-195 and Asn-204. Disordered regions lie at residues 219 to 256 and 269 to 291; these read KQRQPDEVQAEVVEPVNEQTEEAEEQDNPAEDHPQSKR and GVEAPNPLKKRSRTKRQSPGRST. The segment covering 237 to 247 has biased composition (acidic residues); sequence QTEEAEEQDNP. Positions 276-286 are enriched in basic residues; sequence LKKRSRTKRQS. A Spaetzle domain is found at 291-384; it reads TLCQTTSQFI…WFPSCCVCTI (94 aa). Cystine bridges form between Cys-293-Cys-350, Cys-331-Cys-380, and Cys-340-Cys-382.

In terms of assembly, homodimer; disulfide-linked. In terms of tissue distribution, detected in the fan-shaped body which is a component of the locomotion center in the central nervous system (CNS) (at protein level).

Its function is as follows. Neurotrophin which may function as a ligand for the Toll-related receptors Toll-6 and Toll-7. Binds to Toll-7 and Toll-6, and probably acts as their ligands in the promotion of motor axon targeting and neuronal survival in the central nervous system (CNS). Involved in synaptic targeting of ISNb/d motorneurons and also some SNa motorneurons. May be involved in the normal development of specific neurons at the neuromuscular junction. This is Protein spaetzle 5 from Drosophila melanogaster (Fruit fly).